The following is a 310-amino-acid chain: N-acetyl-gamma-glutamyl-phosphate reductase (310 aa).

Cys-117 is an active-site residue.

This sequence belongs to the NAGSA dehydrogenase family. Type 2 subfamily.

Its subcellular location is the cytoplasm. The enzyme catalyses N-acetyl-L-glutamate 5-semialdehyde + phosphate + NADP(+) = N-acetyl-L-glutamyl 5-phosphate + NADPH + H(+). It functions in the pathway amino-acid biosynthesis; L-arginine biosynthesis; N(2)-acetyl-L-ornithine from L-glutamate: step 3/4. In terms of biological role, catalyzes the NADPH-dependent reduction of N-acetyl-5-glutamyl phosphate to yield N-acetyl-L-glutamate 5-semialdehyde. This chain is N-acetyl-gamma-glutamyl-phosphate reductase, found in Rhizobium johnstonii (strain DSM 114642 / LMG 32736 / 3841) (Rhizobium leguminosarum bv. viciae).